A 448-amino-acid polypeptide reads, in one-letter code: N-succinylarginine dihydrolase (448 aa).

Substrate contacts are provided by residues 19-28 (AGLSSGNIAS), asparagine 110, and 137-138 (HR). Glutamate 174 is an active-site residue. Substrate is bound at residue arginine 216. Histidine 252 is a catalytic residue. Substrate-binding residues include aspartate 254 and asparagine 366. Cysteine 372 functions as the Nucleophile in the catalytic mechanism.

Belongs to the succinylarginine dihydrolase family. As to quaternary structure, homodimer.

It carries out the reaction N(2)-succinyl-L-arginine + 2 H2O + 2 H(+) = N(2)-succinyl-L-ornithine + 2 NH4(+) + CO2. It participates in amino-acid degradation; L-arginine degradation via AST pathway; L-glutamate and succinate from L-arginine: step 2/5. Catalyzes the hydrolysis of N(2)-succinylarginine into N(2)-succinylornithine, ammonia and CO(2). This Legionella pneumophila (strain Corby) protein is N-succinylarginine dihydrolase.